Reading from the N-terminus, the 435-residue chain is Keratin, type I cytoskeletal 18 (435 aa).

The tract at residues 2–84 (SYRPGSYSVS…SVSGSGLVGN (83 aa)) is head. The interval 85–120 (EKETMIGLNDRLAAYLETVRNLEQANSKLEFQIREA) is coil 1A. The region spanning 85–396 (EKETMIGLND…RLLDGEDFRL (312 aa)) is the IF rod domain. The tract at residues 121-137 (LEKKGPTTRDLSPFEKT) is linker 1. Positions 138–229 (LEDLRKKVYD…QNHNQEVNDL (92 aa)) are coil 1B. Residues 230–253 (RNQIAQSGVQVDVDAPKGQDLAQV) form a linker 12 region. A coil 2 region spans residues 254–391 (LAEVRAQYES…IATYRRLLDG (138 aa)). The interval 392-435 (EDFRLQDALVDQSSTKSIKKVTVTQTLVDGKVVSESTNTKEIGK) is tail.

Belongs to the intermediate filament family. As to quaternary structure, heterotetramer of two type I and two type II keratins. Keratin-18 associates with keratin-8. Post-translationally, phosphorylated. Proteolytically cleaved by caspases during epithelial cell apoptosis.

When phosphorylated, plays a role in filament reorganization. The protein is Keratin, type I cytoskeletal 18 of Acipenser baerii (Siberian sturgeon).